Reading from the N-terminus, the 225-residue chain is Glucose-induced degradation protein 8 homolog (225 aa).

Residues 22-54 form the LisH domain; that stretch reads QRAEMNRLIMDYLVTEGYKEAAEKFRIESGTQP. In terms of domain architecture, CTLH spans 60–117; the sequence is SLDDRIKIREAVQKGDLEQAVSMTNKLNPDILDSNQQLYFHLQQQRLIELIREKDIEA.

The protein belongs to the GID8 family.

The protein resides in the cytoplasm. Its subcellular location is the nucleus. Functionally, core component of the CTLH E3 ubiquitin-protein ligase complex that mediates ubiquitination and subsequent proteasomal degradation of target proteins. Acts as a positive regulator of Wnt signaling pathway by promoting beta-catenin (CTNNB1) nuclear accumulation. The protein is Glucose-induced degradation protein 8 homolog of Nematostella vectensis (Starlet sea anemone).